The following is a 269-amino-acid chain: 5'-nucleotidase SurE (269 aa).

Residues D8, D9, S39, and N92 each contribute to the a divalent metal cation site.

This sequence belongs to the SurE nucleotidase family. A divalent metal cation serves as cofactor.

It is found in the cytoplasm. The catalysed reaction is a ribonucleoside 5'-phosphate + H2O = a ribonucleoside + phosphate. Its function is as follows. Nucleotidase that shows phosphatase activity on nucleoside 5'-monophosphates. The chain is 5'-nucleotidase SurE from Psychrobacter cryohalolentis (strain ATCC BAA-1226 / DSM 17306 / VKM B-2378 / K5).